The following is a 304-amino-acid chain: Aspartate carbamoyltransferase catalytic subunit (304 aa).

Positions 49 and 50 each coordinate carbamoyl phosphate. Lys-77 serves as a coordination point for L-aspartate. Carbamoyl phosphate-binding residues include Arg-99, His-127, and Gln-130. The L-aspartate site is built by Arg-160 and Arg-211. The carbamoyl phosphate site is built by Ala-252 and Pro-253.

The protein belongs to the aspartate/ornithine carbamoyltransferase superfamily. ATCase family. As to quaternary structure, heterododecamer (2C3:3R2) of six catalytic PyrB chains organized as two trimers (C3), and six regulatory PyrI chains organized as three dimers (R2).

It carries out the reaction carbamoyl phosphate + L-aspartate = N-carbamoyl-L-aspartate + phosphate + H(+). The protein operates within pyrimidine metabolism; UMP biosynthesis via de novo pathway; (S)-dihydroorotate from bicarbonate: step 2/3. In terms of biological role, catalyzes the condensation of carbamoyl phosphate and aspartate to form carbamoyl aspartate and inorganic phosphate, the committed step in the de novo pyrimidine nucleotide biosynthesis pathway. The chain is Aspartate carbamoyltransferase catalytic subunit from Bacillus cytotoxicus (strain DSM 22905 / CIP 110041 / 391-98 / NVH 391-98).